The primary structure comprises 798 residues: Penicillin-binding protein 1A (798 aa).

Residues 2 to 9 are Cytoplasmic-facing; it reads IKKILTTC. The helical; Signal-anchor for type II membrane protein transmembrane segment at 10 to 30 threads the bilayer; the sequence is FGLFFGFCVFGVGLVAIAILV. Over 31 to 798 the chain is Periplasmic; sequence TYPKLPSLDS…SKQQQLDSLF (768 aa). The segment at 50-218 is transglycosylase; that stretch reads LTIYSADGEV…SAYNPIVNPE (169 aa). Residue Glu-88 is the Proton donor; for transglycosylase activity of the active site. The segment at 378 to 700 is transpeptidase; the sequence is RRALGFAARA…GTIAVPVWVD (323 aa). The active-site Acyl-ester intermediate; for transpeptidase activity is Ser-461. A disordered region spans residues 739 to 798; the sequence is LMLDNSGIAPQPSRRAKEDDEAAVENEQQGRSDETRQDVQETPVLPSNTDSKQQQLDSLF. The span at 766 to 777 shows a compositional bias: basic and acidic residues; it reads QQGRSDETRQDV. Residues 783-798 are compositionally biased toward polar residues; the sequence is LPSNTDSKQQQLDSLF.

This sequence in the N-terminal section; belongs to the glycosyltransferase 51 family. It in the C-terminal section; belongs to the transpeptidase family.

Its subcellular location is the cell inner membrane. It catalyses the reaction [GlcNAc-(1-&gt;4)-Mur2Ac(oyl-L-Ala-gamma-D-Glu-L-Lys-D-Ala-D-Ala)](n)-di-trans,octa-cis-undecaprenyl diphosphate + beta-D-GlcNAc-(1-&gt;4)-Mur2Ac(oyl-L-Ala-gamma-D-Glu-L-Lys-D-Ala-D-Ala)-di-trans,octa-cis-undecaprenyl diphosphate = [GlcNAc-(1-&gt;4)-Mur2Ac(oyl-L-Ala-gamma-D-Glu-L-Lys-D-Ala-D-Ala)](n+1)-di-trans,octa-cis-undecaprenyl diphosphate + di-trans,octa-cis-undecaprenyl diphosphate + H(+). The catalysed reaction is Preferential cleavage: (Ac)2-L-Lys-D-Ala-|-D-Ala. Also transpeptidation of peptidyl-alanyl moieties that are N-acyl substituents of D-alanine.. It functions in the pathway cell wall biogenesis; peptidoglycan biosynthesis. Cell wall formation. Synthesis of cross-linked peptidoglycan from the lipid intermediates. The enzyme has a penicillin-insensitive transglycosylase N-terminal domain (formation of linear glycan strands) and a penicillin-sensitive transpeptidase C-terminal domain (cross-linking of the peptide subunits). Essential for cell wall synthesis. The protein is Penicillin-binding protein 1A (mrcA) of Neisseria gonorrhoeae (strain ATCC 700825 / FA 1090).